Consider the following 482-residue polypeptide: Phenylalanine--tRNA ligase alpha subunit (482 aa).

L-phenylalanine-binding positions include Thr-327, 366 to 368 (QIE), and Tyr-406. Residue Glu-408 coordinates Mg(2+). Phe-430 provides a ligand contact to L-phenylalanine.

This sequence belongs to the class-II aminoacyl-tRNA synthetase family. Phe-tRNA synthetase alpha subunit type 2 subfamily. As to quaternary structure, tetramer of two alpha and two beta subunits. Mg(2+) is required as a cofactor.

The protein localises to the cytoplasm. The enzyme catalyses tRNA(Phe) + L-phenylalanine + ATP = L-phenylalanyl-tRNA(Phe) + AMP + diphosphate + H(+). This chain is Phenylalanine--tRNA ligase alpha subunit, found in Thermoplasma volcanium (strain ATCC 51530 / DSM 4299 / JCM 9571 / NBRC 15438 / GSS1).